A 942-amino-acid chain; its full sequence is Protein inturned (942 aa).

A disordered region spans residues 1-52 (MASVASCDSRPSSDELPGDPSSQEEDEDYDFEDRVSDSGSYSSASSDYDDLE). Acidic residues predominate over residues 22–31 (SQEEDEDYDF). A compositionally biased stretch (low complexity) spans 37–46 (DSGSYSSASS). Residues 185-263 (LVGIIHQTKW…PMQVKLTFEN (79 aa)) enclose the PDZ domain. Residues serine 670 and serine 674 each carry the phosphoserine modification. The tract at residues 704–754 (TRKPSPSCSSGGSDNGCEGGEDDGFSPHTTPDAVRKQRESQGSDGLEESGT) is disordered.

Belongs to the inturned family. Component of the CPLANE (ciliogenesis and planar polarity effectors) complex, composed of INTU, FUZ and WDPCP. Interacts with CPLANE1. Interacts with NPHP4 and DAAM1; INTU is mediating the interaction between NPHP4 and DAAM1.

The protein resides in the cytoplasm. It localises to the cell surface. It is found in the cytoskeleton. The protein localises to the cilium basal body. Its subcellular location is the microtubule organizing center. The protein resides in the centrosome. It localises to the centriole. Plays a key role in ciliogenesis and embryonic development. Regulator of cilia formation by controlling the organization of the apical actin cytoskeleton and the positioning of the basal bodies at the apical cell surface, which in turn is essential for the normal orientation of elongating ciliary microtubules. Plays a key role in definition of cell polarity via its role in ciliogenesis but not via conversion extension. Has an indirect effect on hedgehog signaling. Proposed to function as core component of the CPLANE (ciliogenesis and planar polarity effectors) complex involved in the recruitment of peripheral IFT-A proteins to basal bodies. Required for recruitment of CPLANE2 to the mother centriole. Binds phosphatidylinositol 3-phosphate with highest affinity, followed by phosphatidylinositol 4-phosphate and phosphatidylinositol 5-phosphate. This is Protein inturned (INTU) from Homo sapiens (Human).